Reading from the N-terminus, the 331-residue chain is 6-phosphogluconolactonase (331 aa).

Lys-287 is modified (N6-acetyllysine).

This sequence belongs to the cycloisomerase 2 family.

It carries out the reaction 6-phospho-D-glucono-1,5-lactone + H2O = 6-phospho-D-gluconate + H(+). Its pathway is carbohydrate degradation; pentose phosphate pathway; D-ribulose 5-phosphate from D-glucose 6-phosphate (oxidative stage): step 2/3. Its function is as follows. Catalyzes the hydrolysis of 6-phosphogluconolactone to 6-phosphogluconate. The sequence is that of 6-phosphogluconolactonase from Shigella sonnei (strain Ss046).